A 417-amino-acid chain; its full sequence is 4-hydroxy-3-methylbut-2-en-1-yl diphosphate synthase (flavodoxin) (417 aa).

4 residues coordinate [4Fe-4S] cluster: C304, C307, C350, and E357.

Belongs to the IspG family. It depends on [4Fe-4S] cluster as a cofactor.

It catalyses the reaction (2E)-4-hydroxy-3-methylbut-2-enyl diphosphate + oxidized [flavodoxin] + H2O + 2 H(+) = 2-C-methyl-D-erythritol 2,4-cyclic diphosphate + reduced [flavodoxin]. It participates in isoprenoid biosynthesis; isopentenyl diphosphate biosynthesis via DXP pathway; isopentenyl diphosphate from 1-deoxy-D-xylulose 5-phosphate: step 5/6. Converts 2C-methyl-D-erythritol 2,4-cyclodiphosphate (ME-2,4cPP) into 1-hydroxy-2-methyl-2-(E)-butenyl 4-diphosphate. This Rhizobium meliloti (strain 1021) (Ensifer meliloti) protein is 4-hydroxy-3-methylbut-2-en-1-yl diphosphate synthase (flavodoxin).